Here is a 149-residue protein sequence, read N- to C-terminus: Large ribosomal subunit protein bL9 (149 aa).

This sequence belongs to the bacterial ribosomal protein bL9 family.

In terms of biological role, binds to the 23S rRNA. The polypeptide is Large ribosomal subunit protein bL9 (Anaeromyxobacter dehalogenans (strain 2CP-C)).